The chain runs to 406 residues: MADKIVLAYSGGLDTSVAIPWLKDKGYEVIAVSLDVGQHGKQIENIQKKALKIGAIQSFIIDGKDEFAENYVSKVIKSNALYEGEYPLVSALSRPLIIEKLVQTAHDNNAVAIAHGSTGKGNDQVRFEAAIHALDPEMKIEAPIRDFQWSREEEIEYAHQHNVPVPINFDSPYSIDENLWGRSNEAGILENPWNQAPADAYALTSPVEDTPDEADFVDIEFKNGLPISVNDQEMKMADLIVYLNKLAGIHGIGRIDHVENRLIGIKSREIYETPAAAVIMTAHKDLEDITLEHDVAHFKPIIEQKITNLIYNAMWISPLFDALNKFIDETQKVVNGTVKMKLYKGTATAVARKSENNSLYSEKLATYTSANSFDEQAAVGFMKLYTLPATVYEQVNHIHSKEKEEI.

Residue 8–16 coordinates ATP; it reads AYSGGLDTS. Position 86 (Y86) interacts with L-citrulline. G116 provides a ligand contact to ATP. L-aspartate contacts are provided by T118, N122, and D123. N122 is a binding site for L-citrulline. L-citrulline is bound by residues R126, S174, S183, E259, and Y271.

Belongs to the argininosuccinate synthase family. Type 1 subfamily. In terms of assembly, homotetramer.

The protein localises to the cytoplasm. It carries out the reaction L-citrulline + L-aspartate + ATP = 2-(N(omega)-L-arginino)succinate + AMP + diphosphate + H(+). Its pathway is amino-acid biosynthesis; L-arginine biosynthesis; L-arginine from L-ornithine and carbamoyl phosphate: step 2/3. The chain is Argininosuccinate synthase from Oenococcus oeni (strain ATCC BAA-331 / PSU-1).